Consider the following 1439-residue polypeptide: Fanconi anemia group D2 protein (1439 aa).

A Glycyl lysine isopeptide (Lys-Gly) (interchain with G-Cter in ubiquitin) cross-link involves residue Lys563.

The protein belongs to the Fanconi anemia protein FANCD2 family. Homodimer; cannot be ubiquitinated and does not bind DNA. Part of a FANCI-FANCD2 heterodimeric complex that binds and scans dsDNA for DNA damage. Interacts directly with FANCE and FANCI. Interacts with USP1 and MEN1. The ubiquitinated form specifically interacts with BRCA1 and BLM. Both the nonubiquitinated and the monoubiquitinated forms interact with BRCA2; this interaction is mediated by phosphorylated FANCG and the complex also includes XCCR3. The ubiquitinated form specifically interacts with MTMR15/FAN1 (via UBZ-type zinc finger), leading to recruit MTMR15/FAN1 to sites of DNA damage. Interacts with DCLRE1B/Apollo. Interacts with POLN. Interacts with UHRF1 and UHRF2; these interactions promote FANCD2 activation. In terms of processing, monoubiquitinated on Lys-563 during S phase and upon genotoxic stress. Deubiquitinated by USP1 as cells enter G2/M, or once DNA repair is completed. Monoubiquitination prevents DNA release from the FANCI-FANCD2 complex. FANCD2 is only ubiquitinated in the FANCI-FANCD2 complex and the monoubiquitination of FANCD2 is promoted by phosphorylation of FANCI. Post-translationally, phosphorylated in response to various genotoxic stresses by ATM and/or ATR.

The protein resides in the nucleus. In terms of biological role, required for maintenance of chromosomal stability. Promotes accurate and efficient pairing of homologs during meiosis. Involved in the repair of DNA double-strand breaks, both by homologous recombination and single-strand annealing. The FANCI-FANCD2 complex binds and scans double-stranded DNA (dsDNA) for DNA damage; this complex stalls at DNA junctions between double-stranded DNA and single-stranded DNA. May participate in S phase and G2 phase checkpoint activation upon DNA damage. Plays a role in preventing breakage and loss of missegregating chromatin at the end of cell division, particularly after replication stress. Required for the targeting, or stabilization, of BLM to non-centromeric abnormal structures induced by replicative stress. Promotes BRCA2/FANCD1 loading onto damaged chromatin. May also be involved in B-cell immunoglobulin isotype switching. This is Fanconi anemia group D2 protein from Gallus gallus (Chicken).